The chain runs to 884 residues: Putative GTP diphosphokinase RSH1, chloroplastic (884 aa).

The N-terminal 55 residues, 1 to 55 (MTSASSMSVSVECVNICNLTKGDGNARSDCSALSCAWKAPRALTGFLASTAHPPV), are a transit peptide targeting the chloroplast. Positions 172 to 279 (FIIHPVAVAR…VKLADRLHNM (108 aa)) constitute an HD domain. The region spanning 563–626 (LGSRVFVFTP…ENAEVVEIVT (64 aa)) is the TGS domain. Polar residues predominate over residues 711 to 727 (QSQDKSRDTTPAPQNGS). Positions 711–747 (QSQDKSRDTTPAPQNGSVWAPKVNGKHNKAIKNSSSD) are disordered. Positions 797-868 (WLCVVSMDRK…LVLGVLGWSS (72 aa)) constitute an ACT domain.

The protein belongs to the RelA/SpoT family. Interacts with RPP4. Interacts with RPP5. As to expression, expressed in hypocotyls, shoots, cotyledons, rosette leaves, sepals and pistils.

It is found in the plastid. Its subcellular location is the chloroplast. The catalysed reaction is GTP + ATP = guanosine 3'-diphosphate 5'-triphosphate + AMP. Functionally, may be involved in a rapid plant ppGpp (guanosine 3'-diphosphate 5'-diphosphate)-mediated response to pathogens and other stresses. Unable to functionally complement E.coli relA mutants. The protein is Putative GTP diphosphokinase RSH1, chloroplastic (RSH1) of Arabidopsis thaliana (Mouse-ear cress).